The sequence spans 60 residues: Naniproin (60 aa).

Disulfide bonds link cysteine 3–cysteine 21, cysteine 14–cysteine 38, cysteine 42–cysteine 53, and cysteine 54–cysteine 59.

It belongs to the three-finger toxin family. Short-chain subfamily. Type IA cytotoxin sub-subfamily. In terms of assembly, monomer in solution; Homodimer and oligomer in the presence of negatively charged lipids forming a pore with a size ranging between 20 and 30 angstroms. As to expression, expressed by the venom gland.

The protein localises to the secreted. It is found in the target cell membrane. In terms of biological role, basic protein that binds to cell membrane and depolarizes cardiomyocytes. This cytotoxin also possesses lytic activity on many other cells, including red blood cells. Interaction with sulfatides in the cell membrane induces pore formation and cell internalization and is responsible for cytotoxicity in cardiomyocytes. It targets the mitochondrial membrane and induces mitochondrial swelling and fragmentation. Inhibits protein kinases C. It binds to the integrin alpha-V/beta-3 with a moderate affinity. The protein is Naniproin of Naja nigricollis (Black-necked spitting cobra).